The primary structure comprises 740 residues: Ion-translocating oxidoreductase complex subunit C (740 aa).

2 4Fe-4S ferredoxin-type domains span residues 369 to 397 (GEPQEEQSCIRCSACADACPADLLPQQLY) and 407 to 436 (KATTHNIADCIECGACAWVCPSNIPLVQYF). The [4Fe-4S] cluster site is built by cysteine 377, cysteine 380, cysteine 383, cysteine 387, cysteine 416, cysteine 419, cysteine 422, and cysteine 426. Positions 602–716 (KLEQQQANAE…EPEEQVDPRK (115 aa)) are disordered.

The protein belongs to the 4Fe4S bacterial-type ferredoxin family. RnfC subfamily. The complex is composed of six subunits: RsxA, RsxB, RsxC, RsxD, RsxE and RsxG. [4Fe-4S] cluster is required as a cofactor.

The protein resides in the cell inner membrane. Its function is as follows. Part of a membrane-bound complex that couples electron transfer with translocation of ions across the membrane. Required to maintain the reduced state of SoxR. This chain is Ion-translocating oxidoreductase complex subunit C, found in Escherichia coli (strain SE11).